A 90-amino-acid polypeptide reads, in one-letter code: Acylphosphatase (90 aa).

The region spanning 3-90 is the Acylphosphatase-like domain; sequence QYHMIADGRV…KGYRTFSISY (88 aa). Active-site residues include Arg18 and Asn36.

This sequence belongs to the acylphosphatase family.

The catalysed reaction is an acyl phosphate + H2O = a carboxylate + phosphate + H(+). The polypeptide is Acylphosphatase (acyP) (Bacillus velezensis (strain DSM 23117 / BGSC 10A6 / LMG 26770 / FZB42) (Bacillus amyloliquefaciens subsp. plantarum)).